Consider the following 313-residue polypeptide: MSSREIRIATRKSALALWQAEYVKARLEQAHPGLKVSLVPMVSRGDKLLDSPLSKIGGKGLFVKELETALLENEADIAVHSMKDVPMDFPEGLGLFCICEREDPRDAFVSNTYASLDALPLGSIVGTSSLRRQAQLLTRRPDLQIRFLRGNVNTRLAKLDAGEYDAIILAAAGLIRLGFEDRITSAISVEDSLPAGGQGAVGIECRTADSDIHALLKPLDHHDTEVRVTAERALNKHLNGGCQVPIACYAVLEGENLWLRGLVGDPEGGNLLTAEVRGPQCDATALGIQVAQALLDKGAGAILQKVYGEAGPQ.

Cys242 bears the S-(dipyrrolylmethanemethyl)cysteine mark.

It belongs to the HMBS family. As to quaternary structure, monomer. The cofactor is dipyrromethane.

The catalysed reaction is 4 porphobilinogen + H2O = hydroxymethylbilane + 4 NH4(+). Its pathway is porphyrin-containing compound metabolism; protoporphyrin-IX biosynthesis; coproporphyrinogen-III from 5-aminolevulinate: step 2/4. Tetrapolymerization of the monopyrrole PBG into the hydroxymethylbilane pre-uroporphyrinogen in several discrete steps. The polypeptide is Porphobilinogen deaminase (Pseudomonas fluorescens (strain SBW25)).